The sequence spans 421 residues: Adenosylhomocysteinase (421 aa).

Substrate-binding residues include Asp128 and Glu153. 154-156 (TTT) provides a ligand contact to NAD(+). Residues Lys183 and Asp187 each contribute to the substrate site. NAD(+) contacts are provided by residues Asn188, 217-222 (GYGWCG), Glu240, 296-298 (AGH), and Asn343.

The protein belongs to the adenosylhomocysteinase family. NAD(+) is required as a cofactor.

It is found in the cytoplasm. It catalyses the reaction S-adenosyl-L-homocysteine + H2O = L-homocysteine + adenosine. Its pathway is amino-acid biosynthesis; L-homocysteine biosynthesis; L-homocysteine from S-adenosyl-L-homocysteine: step 1/1. Its function is as follows. May play a key role in the regulation of the intracellular concentration of adenosylhomocysteine. This is Adenosylhomocysteinase from Thermococcus kodakarensis (strain ATCC BAA-918 / JCM 12380 / KOD1) (Pyrococcus kodakaraensis (strain KOD1)).